A 238-amino-acid polypeptide reads, in one-letter code: Flagellar L-ring protein (238 aa).

The N-terminal stretch at 1–16 (MNKAILAVAMVLLLAG) is a signal peptide. A lipid anchor (N-palmitoyl cysteine) is attached at Cys-17. Cys-17 is lipidated: S-diacylglycerol cysteine.

It belongs to the FlgH family. In terms of assembly, the basal body constitutes a major portion of the flagellar organelle and consists of four rings (L,P,S, and M) mounted on a central rod.

The protein localises to the cell outer membrane. The protein resides in the bacterial flagellum basal body. Functionally, assembles around the rod to form the L-ring and probably protects the motor/basal body from shearing forces during rotation. The sequence is that of Flagellar L-ring protein from Brucella abortus (strain 2308).